The following is a 285-amino-acid chain: ATP phosphoribosyltransferase (285 aa).

This sequence belongs to the ATP phosphoribosyltransferase family. Long subfamily. Mg(2+) serves as cofactor.

It localises to the cytoplasm. It catalyses the reaction 1-(5-phospho-beta-D-ribosyl)-ATP + diphosphate = 5-phospho-alpha-D-ribose 1-diphosphate + ATP. Its pathway is amino-acid biosynthesis; L-histidine biosynthesis; L-histidine from 5-phospho-alpha-D-ribose 1-diphosphate: step 1/9. Feedback inhibited by histidine. Functionally, catalyzes the condensation of ATP and 5-phosphoribose 1-diphosphate to form N'-(5'-phosphoribosyl)-ATP (PR-ATP). Has a crucial role in the pathway because the rate of histidine biosynthesis seems to be controlled primarily by regulation of HisG enzymatic activity. In Methanocella arvoryzae (strain DSM 22066 / NBRC 105507 / MRE50), this protein is ATP phosphoribosyltransferase.